We begin with the raw amino-acid sequence, 1287 residues long: DNA-directed RNA polymerase 147 kDa polypeptide (1287 aa).

It belongs to the poxviridae DNA-directed RNA polymerase 147 kDa subunit family. As to quaternary structure, the DNA-dependent RNA polymerase used for intermediate and late genes expression consists of eight subunits Rpo30/OPG66, Rpo7/OPG90, Rpo22/OPG103, Rpo147/OPG105, Rpo18/OPG119, Rpo19/OPG131, Rpo132/OPG151 and Rpo35/OPG156. The same holoenzyme, with the addition of the transcription-specificity factor OPG109, is used for early gene expression.

It localises to the virion. It catalyses the reaction RNA(n) + a ribonucleoside 5'-triphosphate = RNA(n+1) + diphosphate. Functionally, part of the DNA-dependent RNA polymerase which catalyzes the transcription of viral DNA into RNA using the four ribonucleoside triphosphates as substrates. Responsible for the transcription of early, intermediate and late genes. DNA-dependent RNA polymerase associates with the early transcription factor (ETF), itself composed of OPG118 and OPG133, thereby allowing the early genes transcription. Late transcription, and probably also intermediate transcription, require newly synthesized RNA polymerase. This chain is DNA-directed RNA polymerase 147 kDa polypeptide (OPG105), found in Bos taurus (Bovine).